The primary structure comprises 106 residues: MTGERYAFRMKLNPGMEAEYRRRHDEIWPELVDLLHETGVSDYAIYLDEETSTLFGVLTRKPNHGMAALPDHPVMKKWWAHMADIMATNADNSPVSVDLKPVFHMP.

Residue Tyr20 coordinates substrate. His24 acts as the Proton donor in catalysis. Substrate is bound by residues Tyr43 and 78–79 (WW).

It belongs to the rhamnose mutarotase family. Homodimer.

It is found in the cytoplasm. It catalyses the reaction alpha-L-rhamnose = beta-L-rhamnose. It functions in the pathway carbohydrate metabolism; L-rhamnose metabolism. Functionally, involved in the anomeric conversion of L-rhamnose. The chain is L-rhamnose mutarotase from Brucella anthropi (strain ATCC 49188 / DSM 6882 / CCUG 24695 / JCM 21032 / LMG 3331 / NBRC 15819 / NCTC 12168 / Alc 37) (Ochrobactrum anthropi).